Consider the following 140-residue polypeptide: Ribosome maturation factor RimP (140 aa).

This sequence belongs to the RimP family.

The protein localises to the cytoplasm. Required for maturation of 30S ribosomal subunits. In Campylobacter jejuni subsp. jejuni serotype O:6 (strain 81116 / NCTC 11828), this protein is Ribosome maturation factor RimP.